The primary structure comprises 63 residues: Large ribosomal subunit protein eL37 (63 aa).

Zn(2+) is bound by residues cysteine 20, cysteine 23, cysteine 35, and cysteine 38. Residues 20-38 (CRRCGHHSFNVRKGYCAHC) form a C4-type zinc finger.

The protein belongs to the eukaryotic ribosomal protein eL37 family. Zn(2+) is required as a cofactor.

Functionally, binds to the 23S rRNA. The chain is Large ribosomal subunit protein eL37 from Thermofilum pendens (strain DSM 2475 / Hrk 5).